Consider the following 243-residue polypeptide: Hydroxyacylglutathione hydrolase (243 aa).

Residues His-52, His-54, Asp-56, His-57, His-108, Asp-125, and His-163 each contribute to the Zn(2+) site.

This sequence belongs to the metallo-beta-lactamase superfamily. Glyoxalase II family. Monomer. Zn(2+) is required as a cofactor.

It catalyses the reaction an S-(2-hydroxyacyl)glutathione + H2O = a 2-hydroxy carboxylate + glutathione + H(+). Its pathway is secondary metabolite metabolism; methylglyoxal degradation; (R)-lactate from methylglyoxal: step 2/2. Thiolesterase that catalyzes the hydrolysis of S-D-lactoyl-glutathione to form glutathione and D-lactic acid. This Haemophilus influenzae (strain PittGG) protein is Hydroxyacylglutathione hydrolase.